Here is a 362-residue protein sequence, read N- to C-terminus: Probable endopolygalacturonase II (362 aa).

Positions 1-20 (MHSFASLLAYGLAAGATLAS) are cleaved as a signal peptide. Positions 21 to 27 (ASPIEAR) are excised as a propeptide. An intrachain disulfide couples Cys-30 to Cys-45. One copy of the PbH1 1 repeat lies at 156 to 186 (SDDITLTDITINNADGDSLGGHNTDAFDVGN). The active-site Proton donor is Asp-201. Cys-203 and Cys-219 form a disulfide bridge. 4 PbH1 repeats span residues 209–229 (GENI…SIGS), 238–259 (VKNV…RIKT), 267–289 (VSEI…VIQQ), and 301–322 (TNGV…DSKA). His-223 is a catalytic residue. Residue Asn-240 is glycosylated (N-linked (GlcNAc...) asparagine). 2 cysteine pairs are disulfide-bonded: Cys-329–Cys-334 and Cys-353–Cys-362.

The protein belongs to the glycosyl hydrolase 28 family.

It localises to the secreted. The enzyme catalyses (1,4-alpha-D-galacturonosyl)n+m + H2O = (1,4-alpha-D-galacturonosyl)n + (1,4-alpha-D-galacturonosyl)m.. Functionally, involved in maceration and soft-rotting of plant tissue. Hydrolyzes the 1,4-alpha glycosidic bonds of de-esterified pectate in the smooth region of the plant cell wall. This Aspergillus kawachii (strain NBRC 4308) (White koji mold) protein is Probable endopolygalacturonase II (pgaII).